A 432-amino-acid chain; its full sequence is Enolase (432 aa).

A (2R)-2-phosphoglycerate-binding site is contributed by Gln163. Glu205 (proton donor) is an active-site residue. Mg(2+)-binding residues include Asp242, Glu285, and Asp312. (2R)-2-phosphoglycerate contacts are provided by Lys337, Arg366, Ser367, and Lys388. The active-site Proton acceptor is the Lys337.

This sequence belongs to the enolase family. Mg(2+) is required as a cofactor.

It is found in the cytoplasm. It localises to the secreted. The protein resides in the cell surface. The enzyme catalyses (2R)-2-phosphoglycerate = phosphoenolpyruvate + H2O. The protein operates within carbohydrate degradation; glycolysis; pyruvate from D-glyceraldehyde 3-phosphate: step 4/5. Catalyzes the reversible conversion of 2-phosphoglycerate (2-PG) into phosphoenolpyruvate (PEP). It is essential for the degradation of carbohydrates via glycolysis. The chain is Enolase from Desulfovibrio desulfuricans (strain ATCC 27774 / DSM 6949 / MB).